The sequence spans 400 residues: MRIEPIIQGVVARSAHPFGCEAAIKKQIAFVKNAPQISQGPKRVLILGASSGFGLAARIALTFGGAQADTIGVSFERGPSEKGTGSAGWYNNVFFKREAEKEGRIAINIVGDAFASETRTQVIEAIETYFEGEVDLVIYSLATGMRPISNQPGEFWRSVIKPFGQTVTGASFDLEHDRWIDTTLESATEEEALHTIKVMGGEDWESWIDTLINAESIAQGCQTIAFSYVGPEITHPIYLDGTLGRAKIDLHQTSHSLNLKLANFDGAAYATVCKALVTKASVFIPALSPYLLALYRVMKDEKCHEGCIEQMQRLFATKLYGQDHISVDGERLVRMDDWELAPHIQNKVNQILEEMDANNFQVIGDYQGFKNEFLQLNGFGFDEVDYSQDIDLQTILKLTP.

NAD(+)-binding positions include 48-53 (GASSGF), 75-76 (FE), 112-113 (DA), and 141-142 (LA). Position 228 (Tyr228) interacts with substrate. Tyr238 (proton donor) is an active-site residue. Residues Lys247 and 276-278 (LVT) contribute to the NAD(+) site.

This sequence belongs to the TER reductase family. In terms of assembly, monomer.

It catalyses the reaction a 2,3-saturated acyl-[ACP] + NAD(+) = a (2E)-enoyl-[ACP] + NADH + H(+). It functions in the pathway lipid metabolism; fatty acid biosynthesis. Its function is as follows. Involved in the final reduction of the elongation cycle of fatty acid synthesis (FAS II). Catalyzes the reduction of a carbon-carbon double bond in an enoyl moiety that is covalently linked to an acyl carrier protein (ACP). This is Enoyl-[acyl-carrier-protein] reductase [NADH] 2 from Vibrio vulnificus (strain CMCP6).